The chain runs to 122 residues: MIQVESTLQVADNSGAKKVACIKVLGGSKRRYATVGDIIVVSVKEAIPHSKVKKGEVLQAVIVRTKKEVRRMDGSYIKFDSNAAVLLSKQGEPVGTRIFGPVARELRARNFMKIISLAPEVL.

It belongs to the universal ribosomal protein uL14 family. In terms of assembly, part of the 50S ribosomal subunit. Forms a cluster with proteins L3 and L19. In the 70S ribosome, L14 and L19 interact and together make contacts with the 16S rRNA in bridges B5 and B8.

Its function is as follows. Binds to 23S rRNA. Forms part of two intersubunit bridges in the 70S ribosome. In Lawsonia intracellularis (strain PHE/MN1-00), this protein is Large ribosomal subunit protein uL14.